A 38-amino-acid chain; its full sequence is Large ribosomal subunit protein bL36c (38 aa).

The protein belongs to the bacterial ribosomal protein bL36 family.

It is found in the plastid. The protein localises to the apicoplast. This is Large ribosomal subunit protein bL36c (rpl36) from Theileria parva (East coast fever infection agent).